The sequence spans 324 residues: tRNA dimethylallyltransferase (324 aa).

An ATP-binding site is contributed by G17–T24. Residue T19–T24 coordinates substrate. Interaction with substrate tRNA stretches follow at residues D42 to L45, Q166 to R170, and R251 to R256.

This sequence belongs to the IPP transferase family. As to quaternary structure, monomer. Mg(2+) serves as cofactor.

It catalyses the reaction adenosine(37) in tRNA + dimethylallyl diphosphate = N(6)-dimethylallyladenosine(37) in tRNA + diphosphate. Its function is as follows. Catalyzes the transfer of a dimethylallyl group onto the adenine at position 37 in tRNAs that read codons beginning with uridine, leading to the formation of N6-(dimethylallyl)adenosine (i(6)A). The polypeptide is tRNA dimethylallyltransferase (Burkholderia pseudomallei (strain 1106a)).